Reading from the N-terminus, the 384-residue chain is Calreticulin-3 (384 aa).

The first 19 residues, 1–19 (MARALVQLWAICMLRVALA), serve as a signal peptide directing secretion. Positions 20–197 (TVYFQEEFLD…GQSIESGSIE (178 aa)) are N-domain. N42 carries N-linked (GlcNAc...) asparagine glycosylation. A disulfide bridge links C105 with C137. An alpha-D-glucoside is bound by residues Y109, K111, Y128, and D135. 7 tandem repeats follow at residues 191-202 (IESGSIEYDWNL), 208-219 (ETSPAESKDWEQ), 221-230 (KDNKAQDWEK), 234-245 (DASTSKQSDWNG), 249-259 (GDWPAPMLQKP), 263-271 (DGLKPEGIH), and 273-283 (DVWLHRKMKNT). The interval 191 to 245 (IESGSIEYDWNLTSLKKETSPAESKDWEQTKDNKAQDWEKHFLDASTSKQSDWNG) is 4 X approximate repeats. A P-domain region spans residues 198–294 (YDWNLTSLKK…YLTQYDLSEF (97 aa)). N201 carries an N-linked (GlcNAc...) asparagine glycan. Residues 249–283 (GDWPAPMLQKPPYQDGLKPEGIHKDVWLHRKMKNT) form a 3 X approximate repeats region. The C-domain stretch occupies residues 295-384 (ENIGAIGLEL…FNQFHRRNEL (90 aa)). E303 contacts an alpha-D-glucoside. A Prevents secretion from ER motif is present at residues 381–384 (RNEL).

The protein belongs to the calreticulin family. Component of an EIF2 complex at least composed of CELF1/CUGBP1, CALR, CALR3, EIF2S1, EIF2S2, HSP90B1 and HSPA5. Testis specific.

It localises to the endoplasmic reticulum lumen. Functionally, during spermatogenesis, may act as a lectin-independent chaperone for specific client proteins such as ADAM3. Required for sperm fertility. CALR3 capacity for calcium-binding may be absent or much lower than that of CALR. This Homo sapiens (Human) protein is Calreticulin-3 (CALR3).